The sequence spans 169 residues: Small ribosomal subunit protein uS5 (169 aa).

Residues 13 to 76 (LVEKLVSVRR…EKARRNMKDV (64 aa)) enclose the S5 DRBM domain.

It belongs to the universal ribosomal protein uS5 family. In terms of assembly, part of the 30S ribosomal subunit. Contacts proteins S4 and S8.

With S4 and S12 plays an important role in translational accuracy. Its function is as follows. Located at the back of the 30S subunit body where it stabilizes the conformation of the head with respect to the body. This Hydrogenovibrio crunogenus (strain DSM 25203 / XCL-2) (Thiomicrospira crunogena) protein is Small ribosomal subunit protein uS5.